We begin with the raw amino-acid sequence, 119 residues long: MARVKRGVTTHARHKKVLKLAKGYRGRSSKCYRIALERVEKALRYAYRDRRNRKRDFRGLWIQRINAGARLHGLTYSKFMHGLKRAGIEVDRKVLSDIAAREPESFKALVEQAQKALAA.

Belongs to the bacterial ribosomal protein bL20 family.

Its function is as follows. Binds directly to 23S ribosomal RNA and is necessary for the in vitro assembly process of the 50S ribosomal subunit. It is not involved in the protein synthesizing functions of that subunit. The protein is Large ribosomal subunit protein bL20 of Rhodospirillum centenum (strain ATCC 51521 / SW).